Here is a 111-residue protein sequence, read N- to C-terminus: uncharacterized protein (111 aa).

The protein belongs to the asfivirus E111R family.

This is an uncharacterized protein from Ornithodoros (relapsing fever ticks).